A 243-amino-acid chain; its full sequence is Sugar fermentation stimulation protein homolog (243 aa).

Belongs to the SfsA family.

The chain is Sugar fermentation stimulation protein homolog from Acaryochloris marina (strain MBIC 11017).